Reading from the N-terminus, the 357-residue chain is 3-dehydroquinate synthase (357 aa).

NAD(+) is bound by residues 69–74 (DGEKNK), 103–107 (GVIGD), 127–128 (TT), K140, and K149. The Zn(2+) site is built by E182, H245, and H262.

It belongs to the sugar phosphate cyclases superfamily. Dehydroquinate synthase family. Co(2+) is required as a cofactor. Zn(2+) serves as cofactor. The cofactor is NAD(+).

Its subcellular location is the cytoplasm. It catalyses the reaction 7-phospho-2-dehydro-3-deoxy-D-arabino-heptonate = 3-dehydroquinate + phosphate. Its pathway is metabolic intermediate biosynthesis; chorismate biosynthesis; chorismate from D-erythrose 4-phosphate and phosphoenolpyruvate: step 2/7. Functionally, catalyzes the conversion of 3-deoxy-D-arabino-heptulosonate 7-phosphate (DAHP) to dehydroquinate (DHQ). This is 3-dehydroquinate synthase from Shewanella denitrificans (strain OS217 / ATCC BAA-1090 / DSM 15013).